Consider the following 200-residue polypeptide: uncharacterized protein (200 aa).

Residues 1–21 (MSNSAQRDARNSRDESARASD) form a disordered region. Basic and acidic residues predominate over residues 7–21 (RDARNSRDESARASD).

This is an uncharacterized protein from Mycobacterium tuberculosis (strain CDC 1551 / Oshkosh).